Here is a 194-residue protein sequence, read N- to C-terminus: 5-formyltetrahydrofolate cyclo-ligase (194 aa).

Residues 6–10 (KSQLR), 139–146 (GRGAGFYD), and aspartate 177 contribute to the ATP site.

The protein belongs to the 5-formyltetrahydrofolate cyclo-ligase family.

It catalyses the reaction (6S)-5-formyl-5,6,7,8-tetrahydrofolate + ATP = (6R)-5,10-methenyltetrahydrofolate + ADP + phosphate. It functions in the pathway one-carbon metabolism; tetrahydrofolate interconversion. Functionally, involved in the removal of 5-formyltetrahydrofolate. In vitro, it is a potent inhibitor of various folate-dependent enzymes in the C1 metabolism network and in vivo it might function as a folate storage. 5-formyltetrahydrofolate is also used as an antifolate rescue agent in cancer chemotherapy. Catalyzes the irreversible ATP-dependent transformation of 5-formyltetrahydrofolate (5-CHO-THF) to form 5,10-methenyltetrahydrofolate (5,10-CH=THF). The reverse reaction is catalyzed by the serine hydroxymethyltransferase GlyA (SHMT). This chain is 5-formyltetrahydrofolate cyclo-ligase, found in Mycolicibacterium smegmatis (strain ATCC 700084 / mc(2)155) (Mycobacterium smegmatis).